The primary structure comprises 266 residues: UPF0354 protein LMHCC_0955 (266 aa).

The protein belongs to the UPF0354 family.

The chain is UPF0354 protein LMHCC_0955 from Listeria monocytogenes serotype 4a (strain HCC23).